Consider the following 70-residue polypeptide: Putative membrane protein insertion efficiency factor (70 aa).

This sequence belongs to the UPF0161 family.

The protein localises to the cell inner membrane. Functionally, could be involved in insertion of integral membrane proteins into the membrane. This is Putative membrane protein insertion efficiency factor from Rhizorhabdus wittichii (strain DSM 6014 / CCUG 31198 / JCM 15750 / NBRC 105917 / EY 4224 / RW1) (Sphingomonas wittichii).